We begin with the raw amino-acid sequence, 227 residues long: Orotidine 5'-phosphate decarboxylase (227 aa).

Substrate-binding positions include Asp-8, Lys-30, 57 to 66, Thr-116, Arg-177, Gln-186, Gly-206, and Arg-207; that span reads DLKFHDIPNT. The active-site Proton donor is the Lys-59.

This sequence belongs to the OMP decarboxylase family. Type 1 subfamily. Homodimer.

It carries out the reaction orotidine 5'-phosphate + H(+) = UMP + CO2. It participates in pyrimidine metabolism; UMP biosynthesis via de novo pathway; UMP from orotate: step 2/2. Its function is as follows. Catalyzes the decarboxylation of orotidine 5'-monophosphate (OMP) to uridine 5'-monophosphate (UMP). This chain is Orotidine 5'-phosphate decarboxylase, found in Acinetobacter baumannii (strain AB307-0294).